Reading from the N-terminus, the 366-residue chain is Probable trehalose-phosphate phosphatase 3 (366 aa).

The protein belongs to the trehalose phosphatase family. Requires a divalent metal cation as cofactor.

It carries out the reaction alpha,alpha-trehalose 6-phosphate + H2O = alpha,alpha-trehalose + phosphate. Its pathway is glycan biosynthesis; trehalose biosynthesis. Its function is as follows. Removes the phosphate from trehalose 6-phosphate to produce free trehalose. Trehalose accumulation in plant may improve abiotic stress tolerance. This chain is Probable trehalose-phosphate phosphatase 3 (TPP3), found in Oryza sativa subsp. japonica (Rice).